A 629-amino-acid chain; its full sequence is UvrABC system protein C (629 aa).

The region spanning 26-105 (TSPGIYQFKN…IKELKPRYNV (80 aa)) is the GIY-YIG domain. One can recognise a UVR domain in the interval 219–254 (SALIRSLTENMHLAATELRFEQAAEIKAQIESLKRY).

The protein belongs to the UvrC family. In terms of assembly, interacts with UvrB in an incision complex.

It localises to the cytoplasm. Functionally, the UvrABC repair system catalyzes the recognition and processing of DNA lesions. UvrC both incises the 5' and 3' sides of the lesion. The N-terminal half is responsible for the 3' incision and the C-terminal half is responsible for the 5' incision. The protein is UvrABC system protein C of Chlorobium chlorochromatii (strain CaD3).